We begin with the raw amino-acid sequence, 208 residues long: Tektin bundle-interacting protein 1 (208 aa).

In terms of assembly, microtubule inner protein component of sperm flagellar doublet microtubules. In terms of tissue distribution, expressed in trachea multiciliated cells.

The protein resides in the cytoplasm. It is found in the cytoskeleton. Its subcellular location is the cilium axoneme. It localises to the flagellum axoneme. Microtubule inner protein (MIP) part of the dynein-decorated doublet microtubules (DMTs) in cilia axoneme, which is required for motile cilia beating. Located at the center of the tektin bundle where may function to recruit tektins or stabilize the bundle. The polypeptide is Tektin bundle-interacting protein 1 (TEKTIP1) (Bos taurus (Bovine)).